The sequence spans 544 residues: Probable protein kinase UbiB (544 aa).

Residues Asp123 to Leu501 form the Protein kinase domain. ATP is bound by residues Leu129 to Val137 and Lys152. The active-site Proton acceptor is the Asp287. Helical transmembrane passes span Gly496 to Ile516 and Gln519 to Trp539.

It belongs to the ABC1 family. UbiB subfamily.

Its subcellular location is the cell inner membrane. The protein operates within cofactor biosynthesis; ubiquinone biosynthesis [regulation]. Is probably a protein kinase regulator of UbiI activity which is involved in aerobic coenzyme Q (ubiquinone) biosynthesis. This chain is Probable protein kinase UbiB, found in Vibrio cholerae serotype O1 (strain ATCC 39315 / El Tor Inaba N16961).